Reading from the N-terminus, the 287-residue chain is Viomycin phosphotransferase (287 aa).

Catalysis depends on aspartate 190, which acts as the Proton acceptor.

Belongs to the aminoglycoside phosphotransferase family.

It catalyses the reaction viomycin + ATP = O-phosphoviomycin + ADP + H(+). Its function is as follows. The aminoglycoside phosphotransferases achieve inactivation of their antibiotic substrates by phosphorylation. This is Viomycin phosphotransferase (vph) from Streptomyces vinaceus.